We begin with the raw amino-acid sequence, 241 residues long: Large ribosomal subunit protein uL3 (241 aa).

Belongs to the universal ribosomal protein uL3 family. Part of the 50S ribosomal subunit. Forms a cluster with proteins L14 and L19.

Its function is as follows. One of the primary rRNA binding proteins, it binds directly near the 3'-end of the 23S rRNA, where it nucleates assembly of the 50S subunit. This is Large ribosomal subunit protein uL3 from Aquifex aeolicus (strain VF5).